The following is a 168-amino-acid chain: Cofilin-1-A (168 aa).

Position 2 is an N-acetylalanine (A2). Residues 4-153 (GVMVSDDVIK…NDPCNLADKL (150 aa)) enclose the ADF-H domain. Residues 30–34 (KKRKK) carry the Nuclear localization signal motif.

It belongs to the actin-binding proteins ADF family. Inactive when phosphorylated. Phosphorylation levels vary during development. Oocytes contain only the phosphorylated form, and 80-95% of cfl1 protein is phosphorylated in unfertilized eggs. Rapid dephosphorylation occurs within 30 minutes after fertilization. Phosphorylation levels increase again between the morula and blastula stages (5-8 hpf) and then decrease again as gastrulation approaches. Dephosphorylated by pdxp. Expressed diffusely in both animal and vegetal hemispheres of the oocyte. During cleavage, expression accumulates around the cleavage furrow, along the vegetal membrane, and later in the midbody. Strongly expressed in the animal hemisphere during blastula stages, with most cells showing expression by gastrulation. By stage 17, expression is highest in cells of the developing neuroectoderm, and at stage 24 the notochord, neural tube, neural crest, somites and some cells of the archenteron show high expression. By stage 35, expression has declined in the notochord, but remains in the neural tube, epidermis and a layer of cells in the archenteron. Also highly expressed in the retina and neuronal cell bodies at the base of the cement gland but not the cement gland itself. At stage 38, expression is widespread, being highest in the nervous system and retina. In the adult, expression is high in the brain, heart, oocyte, stomach, and low in skeletal muscle.

Its subcellular location is the nucleus matrix. It is found in the cytoplasm. The protein localises to the cytoskeleton. The protein resides in the cell cortex. It localises to the membrane. In terms of biological role, may play a role in the regulation of cell morphology and cytoskeletal organization. Binds to F-actin and exhibits pH-sensitive F-actin depolymerizing activity. Required for formation of the cleavage furrow during cytokinesis. In Xenopus laevis (African clawed frog), this protein is Cofilin-1-A (cfl1-a).